We begin with the raw amino-acid sequence, 77 residues long: UPF0346 protein LMOf2365_1885 (77 aa).

The protein belongs to the UPF0346 family.

This Listeria monocytogenes serotype 4b (strain F2365) protein is UPF0346 protein LMOf2365_1885.